A 128-amino-acid chain; its full sequence is Probable 4-amino-4-deoxy-L-arabinose-phosphoundecaprenol flippase subunit ArnF (128 aa).

At 1-2 (MG) the chain is on the cytoplasmic side. The helical transmembrane segment at 3–23 (LIWGLFSVIIASVAQLSLGFA) threads the bilayer. Topologically, residues 24-35 (ASHLPPMTHLWD) are periplasmic. The helical transmembrane segment at 36–56 (FIAALLAFGLDARILLLGLLG) threads the bilayer. The Cytoplasmic segment spans residues 57–75 (YLLSVFCWYKTLHKLALSK). A helical transmembrane segment spans residues 76 to 96 (AYALLSMSYVLVWIASMVLPG). At 97 to 100 (REGT) the chain is on the periplasmic side. A helical membrane pass occupies residues 101–121 (FSLKALLGVACIMSGLMLIFL). Residues 122-128 (PTTKQRY) lie on the Cytoplasmic side of the membrane.

It belongs to the ArnF family. As to quaternary structure, heterodimer of ArnE and ArnF.

The protein resides in the cell inner membrane. Its pathway is bacterial outer membrane biogenesis; lipopolysaccharide biosynthesis. Translocates 4-amino-4-deoxy-L-arabinose-phosphoundecaprenol (alpha-L-Ara4N-phosphoundecaprenol) from the cytoplasmic to the periplasmic side of the inner membrane. The polypeptide is Probable 4-amino-4-deoxy-L-arabinose-phosphoundecaprenol flippase subunit ArnF (Shigella flexneri serotype 5b (strain 8401)).